A 570-amino-acid chain; its full sequence is Double-stranded RNA-binding protein Staufen homolog 2 (570 aa).

A DRBM 1 domain is found at 8–75 (TPVCLVNELA…ANKALTESTL (68 aa)). Disordered stretches follow at residues 71–94 (TEST…PGSI) and 178–203 (ALQN…DDKD). Polar residues predominate over residues 83–94 (PKSNVNNNPGSI). The DRBM 2 domain maps to 95-181 (TPTVELNGLA…AMKALQALQN (87 aa)). Position 188 is a phosphoserine (serine 188). The span at 194 to 203 (SGKEMDDDKD) shows a compositional bias: basic and acidic residues. DRBM domains are found at residues 207–274 (SEIS…ELKK) and 307–375 (NPIS…QLGY). 2 short sequence motifs (nuclear localization signal) span residues 273-291 (KKLP…FKKR) and 373-412 (LGYK…PKGI). The interval 381 to 413 (LQDPLDKTGENKGWSGPKPGFPEPTNNTPKGIL) is disordered. Residues 381–570 (LQDPLDKTGE…QDCKKSKSAI (190 aa)) form a required for dendritic transport region. Residue serine 395 is modified to Phosphoserine. Phosphothreonine is present on threonine 405. Residues serine 416, serine 426, serine 440, serine 455, and serine 492 each carry the phosphoserine modification. Residues 545 to 570 (LREKADNNQAKPASISQDCKKSKSAI) form a disordered region. The span at 551-561 (NNQAKPASISQ) shows a compositional bias: polar residues.

In terms of assembly, interacts with microtubules. Isoform 2 and isoform 3 may also interact with ribosomes, and this association is independent of translation. Identified in a mRNP complex, at least composed of DHX9, DDX3X, ELAVL1, HNRNPU, IGF2BP1, ILF3, PABPC1, PCBP2, PTBP2, STAU1, STAU2, SYNCRIP and YBX1. Interacts with the exportin XPO5. This requires RNA and RAN bound to GTP. Interacts with TRIM71 (via NHL repeats) in an RNA-dependent manner. In terms of tissue distribution, expressed in brain and neurons, where isoform 2 and isoform 3 appear to be the most abundant. Expressed at the neuromuscular junction of the extensor digitorum longus, tibialis anterior and soleus muscles. Expression at neuromuscular junctions is most pronounced in slow-twitch muscle. Also weakly expressed in heart, kidney, ovary and testis.

It localises to the cytoplasm. The protein localises to the nucleus. It is found in the nucleolus. The protein resides in the endoplasmic reticulum. Functionally, RNA-binding protein required for the microtubule-dependent transport of neuronal RNA from the cell body to the dendrite. As protein synthesis occurs within the dendrite, the localization of specific mRNAs to dendrites may be a prerequisite for neurite outgrowth and plasticity at sites distant from the cell body. This is Double-stranded RNA-binding protein Staufen homolog 2 (Stau2) from Mus musculus (Mouse).